A 223-amino-acid polypeptide reads, in one-letter code: Octanoyltransferase (223 aa).

The region spanning 31–216 is the BPL/LPL catalytic domain; the sequence is GQIGDTLLLL…QIGEVFALEP (186 aa). Substrate-binding positions include 76–83, 145–147, and 159–161; these read RGGEVTYH, AIG, and GLA. Cysteine 177 functions as the Acyl-thioester intermediate in the catalytic mechanism.

It belongs to the LipB family.

It localises to the cytoplasm. It catalyses the reaction octanoyl-[ACP] + L-lysyl-[protein] = N(6)-octanoyl-L-lysyl-[protein] + holo-[ACP] + H(+). It participates in protein modification; protein lipoylation via endogenous pathway; protein N(6)-(lipoyl)lysine from octanoyl-[acyl-carrier-protein]: step 1/2. Its function is as follows. Catalyzes the transfer of endogenously produced octanoic acid from octanoyl-acyl-carrier-protein onto the lipoyl domains of lipoate-dependent enzymes. Lipoyl-ACP can also act as a substrate although octanoyl-ACP is likely to be the physiological substrate. This is Octanoyltransferase from Chloroflexus aurantiacus (strain ATCC 29366 / DSM 635 / J-10-fl).